The chain runs to 325 residues: HTH-type transcriptional regulator BbuR (325 aa).

The HTH lysR-type domain maps to 15-72 (LDTDLLNVFCWVAKTQSFSRAAAELGTSQPVITRKIGRLEECLGVALFVRSNRGCVLT). The H-T-H motif DNA-binding region spans 32–51 (FSRAAAELGTSQPVITRKIG).

The protein belongs to the LysR transcriptional regulatory family.

The chain is HTH-type transcriptional regulator BbuR (bbuR) from Bordetella bronchiseptica (strain ATCC BAA-588 / NCTC 13252 / RB50) (Alcaligenes bronchisepticus).